A 700-amino-acid chain; its full sequence is MHSDELLVEILVEELPAQALLNEYKEMPKKLHALFNKRALEVGKIEIFYTPRRLCLLVKDFPLLTQETKEEFFGPPVKIACNHQDKTQGLNELGLGFYQKLGLKDHQHFQTAFKNNNEVLYHAKIHAKEPTKDLIMPIVLEFLEGLNFGKSMRWGNVEKSFIRPIHNICVLFNGENFNDIEVKEYGFKTKQATKAHRQEGFDFIQVDSPKAYFEVLEKNHVILDPKKRKAKILQEIKELETKHRIIVEIDRDLLDEVVAITEYPSALLGEFDKAFLKLPNEIIITSMKENQRYFAAFNQKSQESPTLHNGFIVVSNAISKDKQKIIAGNQKVLKARLSDAVFFYENDLKKPLDNAPLESVVFVQGLGTLKDKMEREAIIAQYLTQKYASSLNMPLEKALELVGRAVRIAKADLLSEVVYEFSELQGIMGYYYALKQNENELVALSVKEQYLPASENAPLPSSVFSAIVALSLKLDSLFSLFSVGKIPSGSKDPFALRRLSFGLLKIVVHYGLEFDLKADLKNLFEKVGVYQSFDLEVLEKFLLERFNNLIDCNPSIIRSVLNTNERGIVKIIQKVKALKRFLDDPKNAQKKELLFSAFKRLANINKDRNPNESSEFFISLFKESQEHALFEAFNAIKTSTFESLDSKIEAYFGLHAPLEEYFKSVLVMDKDIEIQKNRKNFLWGVYQSFLEIGDIKEIAI.

It belongs to the class-II aminoacyl-tRNA synthetase family. As to quaternary structure, tetramer of two alpha and two beta subunits.

The protein resides in the cytoplasm. It carries out the reaction tRNA(Gly) + glycine + ATP = glycyl-tRNA(Gly) + AMP + diphosphate. The polypeptide is Glycine--tRNA ligase beta subunit (Helicobacter pylori (strain Shi470)).